The following is a 253-amino-acid chain: MNRLLIIDGLNLVRRIHAALPDEGDMDTLYDRVAQACRKLLRGHQPTHCAIVWDGDAISWRKHLYEDYKKGRKPMPEALAKGLPALKTKLETLDVHSVNADSEADDIIATLACKLAATGGEAIIVSTDKGLLQLMSPHIRQWDHFAGQFFDIEAFEAKLGIERHQLLDYIALCGDSGNKIPGIPGIGPKSASELLRTYRSLANLYHSLGTLGSRQANKLREGRDMARLSYKLAKLQTELPLHLKLSDLRVNPS.

Asp-105 provides a ligand contact to Mg(2+). The 5'-3' exonuclease domain occupies 162 to 251; that stretch reads ERHQLLDYIA…HLKLSDLRVN (90 aa). K(+) is bound by residues Leu-172, Pro-181, Ile-183, and Ile-186. The interaction with DNA stretch occupies residues 185–190; sequence GIGPKS.

Belongs to the Xni family. Requires Mg(2+) as cofactor. The cofactor is K(+).

In terms of biological role, has flap endonuclease activity. During DNA replication, flap endonucleases cleave the 5'-overhanging flap structure that is generated by displacement synthesis when DNA polymerase encounters the 5'-end of a downstream Okazaki fragment. This Shewanella amazonensis (strain ATCC BAA-1098 / SB2B) protein is Flap endonuclease Xni.